We begin with the raw amino-acid sequence, 164 residues long: Inner membrane assembly complex subunit 17 (164 aa).

The transit peptide at 1–28 (MIKTAKISTLRLAITRNARNLSFTTLVR) directs the protein to the mitochondrion. The Mitochondrial matrix segment spans residues 29–97 (SPEVDNSKIK…NEVPLKRFTR (69 aa)). Residues 98–118 (PLWIFILMASTFYLGAHLVWW) form a helical membrane-spanning segment. Residues 119-164 (KLAYEKKEVELKHKVDSLETTLKDVMKEKATGPTPCNNKKSWYKFW) lie on the Mitochondrial intermembrane side of the membrane. The stretch at 121 to 149 (AYEKKEVELKHKVDSLETTLKDVMKEKAT) forms a coiled coil.

This sequence belongs to the INA17 family. As to quaternary structure, component of the inner membrane assembly (INA) complex, composed of INA17 and INA22. Interacts with a subset of F(1)F(0)-ATP synthase subunits of the F(1)-domain and the peripheral stalk.

The protein resides in the mitochondrion inner membrane. In terms of biological role, component of the INA complex (INAC) that promotes the biogenesis of mitochondrial F(1)F(0)-ATP synthase. INAC facilitates the assembly of the peripheral stalk and promotes the assembly of the catalytic F(1)-domain with the membrane-embedded F(0)-domain. This chain is Inner membrane assembly complex subunit 17, found in Candida glabrata (strain ATCC 2001 / BCRC 20586 / JCM 3761 / NBRC 0622 / NRRL Y-65 / CBS 138) (Yeast).